The primary structure comprises 861 residues: Semaphorin-4D (861 aa).

An N-terminal signal peptide occupies residues 1–23 (MRMCAPVRGLFLALVVVLRTAVA). A Sema domain is found at 24 to 500 (FAPVPRLTWE…SNSGVVQAPL (477 aa)). Topologically, residues 24 to 733 (FAPVPRLTWE…TVYLKSSDNR (710 aa)) are extracellular. N49 and N77 each carry an N-linked (GlcNAc...) asparagine glycan. Cystine bridges form between C97-C108 and C126-C135. Residues N139 and N191 are each glycosylated (N-linked (GlcNAc...) asparagine). 2 disulfide bridges follow: C257/C370 and C281/C326. N-linked (GlcNAc...) asparagine glycans are attached at residues N379 and N419. The PSI domain occupies 502–551 (FCEKHGSCEDCVLARDPYCAWSPAIKACVTLHQEEASSRGWIQDMSGDTS). 4 disulfide bridges follow: C503–C520, C509–C553, C512–C529, and C576–C624. The Ig-like C2-type domain occupies 555–636 (DKSKESFNQH…EERVRNKTVS (82 aa)). N-linked (GlcNAc...) asparagine glycosylation is found at N613 and N632. The disordered stretch occupies residues 649–709 (VPRTPPSPTS…KSSSGTSCEP (61 aa)). A compositionally biased stretch (polar residues) spans 657 to 681 (TSEDAQTEGSKITSKMPVASTQGSS). A helical transmembrane segment spans residues 734-754 (LLMSLLLFIFVLFLCLFSYNC). At 755 to 861 (YKGYLPGQCL…KFADSDADGD (107 aa)) the chain is on the cytoplasmic side. Residues S782 and S832 each carry the phosphoserine modification. The segment at 793 to 839 (VEPGSFSQQNGDHPKPALDTGYETEQDTITSKVPTDREDSQRIDELS) is disordered. Positions 826-839 (PTDREDSQRIDELS) are enriched in basic and acidic residues.

The protein belongs to the semaphorin family. In terms of assembly, homodimer. Interacts with PLXNB1. Interacts with PLXNB2. As to expression, strongly expressed in lymphoid tissues, especially in the thymus, as well as in the nervous tissues. Expressed in neurons and glia in the developing hippocampus.

Its subcellular location is the cell membrane. In terms of biological role, cell surface receptor for PLXNB1 and PLXNB2 that plays an important role in cell-cell signaling. Regulates GABAergic synapse development. Promotes the development of inhibitory synapses in a PLXNB1-dependent manner. Modulates the complexity and arborization of developing neurites in hippocampal neurons by activating PLXNB1 and interaction with PLXNB1 mediates activation of RHOA. Promotes the migration of cerebellar granule cells. Plays a role in the immune system; induces B-cells to aggregate and improves their viability (in vitro). Induces endothelial cell migration through the activation of PTK2B/PYK2, SRC, and the phosphatidylinositol 3-kinase-AKT pathway. The chain is Semaphorin-4D (Sema4d) from Mus musculus (Mouse).